The primary structure comprises 131 residues: Runt-related transcription factor 2 (131 aa).

The Runt domain maps to 1 to 10; it reads MRVGVPPQIP. The disordered stretch occupies residues 1-75; that stretch reads MRVGVPPQIP…SSTRGTGLPV (75 aa). Position 11 is an asymmetric dimethylarginine (R11). 2 stretches are compositionally biased toward polar residues: residues 13 to 36 and 43 to 70; these read SLNSAPSPFNPQGQSQITDPRQAQ and YDQSYPSYLSQMTSPSIHSTTPLSSTRG.

In terms of assembly, heterodimer of an alpha and a beta subunit. The alpha subunit binds DNA as a monomer and through the Runt domain. DNA-binding is increased by heterodimerization. Interacts with XRCC6 (Ku70) and XRCC5 (Ku80). Interacts with CCNB1, KAT6A and KAT6B. Interacts with HIVEP3. Interacts with IFI204. Interaction with SATB2; the interaction results in enhanced DNA binding and transactivation by these transcription factors. Binds to HIPK3. Interacts with FOXO1 (via a C-terminal region); the interaction inhibits RUNX2 transcriptional activity towards BGLAP. This interaction is prevented on insulin or IGF1 stimulation as FOXO1 is exported from the nucleus. Interacts with FOXP3. Interacts with TMEM119. Interacts with OLFM2. Interacts with IPO7; the interaction inhibits RUNX2 nuclear translocation in osteoblasts. Post-translationally, phosphorylated; probably by MAP kinases (MAPK). Phosphorylation by HIPK3 is required for the SPEN/MINT and FGF2 transactivation during osteoblastic differentiation.

The protein resides in the nucleus. It is found in the cytoplasm. Transcription factor involved in osteoblastic differentiation and skeletal morphogenesis. Essential for the maturation of osteoblasts and both intramembranous and endochondral ossification. CBF binds to the core site, 5'-PYGPYGGT-3', of a number of enhancers and promoters, including murine leukemia virus, polyomavirus enhancer, T-cell receptor enhancers, osteocalcin, osteopontin, bone sialoprotein, alpha 1(I) collagen, LCK, IL-3 and GM-CSF promoters. Inhibits KAT6B-dependent transcriptional activation. In osteoblasts, supports transcription activation: synergizes with SPEN/MINT to enhance FGFR2-mediated activation of the osteocalcin FGF-responsive element (OCFRE). This chain is Runt-related transcription factor 2 (RUNX2), found in Equus caballus (Horse).